The primary structure comprises 227 residues: 7-cyano-7-deazaguanine synthase (227 aa).

ATP is bound at residue 9–19 (LSGGLDSATVL). Zn(2+) contacts are provided by C189, C199, C202, and C205.

The protein belongs to the QueC family. Zn(2+) is required as a cofactor.

It catalyses the reaction 7-carboxy-7-deazaguanine + NH4(+) + ATP = 7-cyano-7-deazaguanine + ADP + phosphate + H2O + H(+). Its pathway is purine metabolism; 7-cyano-7-deazaguanine biosynthesis. In terms of biological role, catalyzes the ATP-dependent conversion of 7-carboxy-7-deazaguanine (CDG) to 7-cyano-7-deazaguanine (preQ(0)). The protein is 7-cyano-7-deazaguanine synthase of Cupriavidus taiwanensis (strain DSM 17343 / BCRC 17206 / CCUG 44338 / CIP 107171 / LMG 19424 / R1) (Ralstonia taiwanensis (strain LMG 19424)).